Here is a 568-residue protein sequence, read N- to C-terminus: Potassium-transporting ATPase potassium-binding subunit (568 aa).

12 consecutive transmembrane segments (helical) span residues 7–27, 65–85, 136–156, 179–199, 254–274, 285–305, 332–352, 354–374, 377–397, 423–443, 487–507, and 530–550; these read ITIGIFFLCVLALTRPLGGFL, HYALALLSFKIVCFVAVYAIL, GLTVQNFVSAAAGIAVAAAII, LYVLLPISVVLSLFYVFEGIP, LTNFVEMISIFAIGAGLTNVF, WAVFSAMSVLFFVGVTAVYWA, FGVAASALFAAVTTDASCGAV, AMHESFLPLGGMVPLINMMLG, IIGGVGAGLYGFILFAIIAVF, MLAVLCLPLVMLGFTAVAVVV, ITLGIGMMIGRFFVIVPALAI, and LFIGLVAGVIIIVGGLTFLPA.

It belongs to the KdpA family. The system is composed of three essential subunits: KdpA, KdpB and KdpC.

It localises to the cell inner membrane. Functionally, part of the high-affinity ATP-driven potassium transport (or Kdp) system, which catalyzes the hydrolysis of ATP coupled with the electrogenic transport of potassium into the cytoplasm. This subunit binds the periplasmic potassium ions and delivers the ions to the membrane domain of KdpB through an intramembrane tunnel. The polypeptide is Potassium-transporting ATPase potassium-binding subunit (Granulibacter bethesdensis (strain ATCC BAA-1260 / CGDNIH1)).